A 901-amino-acid chain; its full sequence is HTH-type transcriptional regulator MalT (901 aa).

An ATP-binding site is contributed by 39–46 (SPAGYGKT). Residues 829 to 894 (ELIRTSPLTQ…DAVQHAQQLL (66 aa)) form the HTH luxR-type domain. Residues 853-872 (NEQIAGELEVAATTIKTHIR) constitute a DNA-binding region (H-T-H motif).

It belongs to the MalT family. In terms of assembly, monomer in solution. Oligomerizes to an active state in the presence of the positive effectors ATP and maltotriose.

Activated by ATP and maltotriose, which are both required for DNA binding. In terms of biological role, positively regulates the transcription of the maltose regulon whose gene products are responsible for uptake and catabolism of malto-oligosaccharides. Specifically binds to the promoter region of its target genes, recognizing a short DNA motif called the MalT box. The polypeptide is HTH-type transcriptional regulator MalT (Escherichia fergusonii (strain ATCC 35469 / DSM 13698 / CCUG 18766 / IAM 14443 / JCM 21226 / LMG 7866 / NBRC 102419 / NCTC 12128 / CDC 0568-73)).